The chain runs to 184 residues: Elongation factor P (184 aa).

This sequence belongs to the elongation factor P family.

The protein localises to the cytoplasm. The protein operates within protein biosynthesis; polypeptide chain elongation. Involved in peptide bond synthesis. Stimulates efficient translation and peptide-bond synthesis on native or reconstituted 70S ribosomes in vitro. Probably functions indirectly by altering the affinity of the ribosome for aminoacyl-tRNA, thus increasing their reactivity as acceptors for peptidyl transferase. The protein is Elongation factor P of Variovorax paradoxus (strain S110).